We begin with the raw amino-acid sequence, 255 residues long: Putative cysteine-rich repeat secretory protein 32 (255 aa).

Positions 1-28 (MYSSYSLFKCLVCFYILGIQVLIHSVSS) are cleaved as a signal peptide. Gnk2-homologous domains lie at 35-136 (YLHH…TINS) and 143-252 (YENT…LYPF).

Belongs to the cysteine-rich repeat secretory protein family.

The protein localises to the secreted. This is Putative cysteine-rich repeat secretory protein 32 (CRRSP32) from Arabidopsis thaliana (Mouse-ear cress).